We begin with the raw amino-acid sequence, 223 residues long: Putative N-acetylmannosamine-6-phosphate 2-epimerase (223 aa).

Belongs to the NanE family.

The enzyme catalyses an N-acyl-D-glucosamine 6-phosphate = an N-acyl-D-mannosamine 6-phosphate. Its pathway is amino-sugar metabolism; N-acetylneuraminate degradation; D-fructose 6-phosphate from N-acetylneuraminate: step 3/5. Converts N-acetylmannosamine-6-phosphate (ManNAc-6-P) to N-acetylglucosamine-6-phosphate (GlcNAc-6-P). The chain is Putative N-acetylmannosamine-6-phosphate 2-epimerase from Staphylococcus haemolyticus (strain JCSC1435).